The chain runs to 78 residues: Exodeoxyribonuclease 7 small subunit (78 aa).

Belongs to the XseB family. Heterooligomer composed of large and small subunits.

The protein resides in the cytoplasm. The catalysed reaction is Exonucleolytic cleavage in either 5'- to 3'- or 3'- to 5'-direction to yield nucleoside 5'-phosphates.. Bidirectionally degrades single-stranded DNA into large acid-insoluble oligonucleotides, which are then degraded further into small acid-soluble oligonucleotides. The chain is Exodeoxyribonuclease 7 small subunit from Nocardia farcinica (strain IFM 10152).